We begin with the raw amino-acid sequence, 645 residues long: Macrolide export ATP-binding/permease protein MacB (645 aa).

Residues 6–244 (IELEGIRRSY…SSIAVVPWQA (239 aa)) enclose the ABC transporter domain. An ATP-binding site is contributed by 42–49 (GASGSGKS). The next 4 membrane-spanning stretches (helical) occupy residues 274–294 (ALTL…MAIG), 526–546 (IAAI…LITV), 574–594 (AVVL…VIGV), and 596–616 (AALL…GALM).

It belongs to the ABC transporter superfamily. Macrolide exporter (TC 3.A.1.122) family. In terms of assembly, homodimer.

The protein localises to the cell inner membrane. Its function is as follows. Non-canonical ABC transporter that contains transmembrane domains (TMD), which form a pore in the inner membrane, and an ATP-binding domain (NBD), which is responsible for energy generation. Confers resistance against macrolides. The polypeptide is Macrolide export ATP-binding/permease protein MacB (Nitrobacter winogradskyi (strain ATCC 25391 / DSM 10237 / CIP 104748 / NCIMB 11846 / Nb-255)).